A 216-amino-acid polypeptide reads, in one-letter code: MDKKLENQKDLLNQDPKVELNSQSVAKNPLNSREVKPIQRRRPLRKNARDKNSKPEFEERVIAIHRVVKVVKGGRRFSFSAFAVVGNKKGRVGFGHGKANEVQDAVKKAIKDAQNRLVSVPIYRKSTVPHEIAVKYLASKILIKPAPRGKGIVASNTVRAVVELAGYTDIYTKTYGSRTKINVVRATLKALLKLRTINQVAELRDLSPQQAQAQKV.

The segment at 1 to 55 (MDKKLENQKDLLNQDPKVELNSQSVAKNPLNSREVKPIQRRRPLRKNARDKNSKP) is disordered. Polar residues predominate over residues 20-31 (LNSQSVAKNPLN). Residues 57–120 (FEERVIAIHR…KDAQNRLVSV (64 aa)) form the S5 DRBM domain.

This sequence belongs to the universal ribosomal protein uS5 family. Part of the 30S ribosomal subunit. Contacts proteins S4 and S8.

In terms of biological role, with S4 and S12 plays an important role in translational accuracy. Its function is as follows. Located at the back of the 30S subunit body where it stabilizes the conformation of the head with respect to the body. The chain is Small ribosomal subunit protein uS5 from Mesomycoplasma hyopneumoniae (strain 7448) (Mycoplasma hyopneumoniae).